Here is a 384-residue protein sequence, read N- to C-terminus: MMPNWSQLPEELLNLISKNLDNCFDVVHARSICRSWRSAFPFPSSLSTLSYSLPTFAKFPLVSKDLCTLKKIQIFLFRARNPAADIPEYFLGGIDQDQSNDHMELPSPLQCSVKVKFPQSDPFLVNMLDYQIIPLGFQYIMIGWDPESLANGYVGVAFLPVKKNGGDEFVVLLRYRNHLLVLRSSEMRWMKVKKTSIASCKGLVSFRGRFYVTFLNGDIYVFDPYSLEQTLLMPSEPLRSSKYLIPNGSDELFLVEKFNPFPEADVLDLSRFACRVSRLDEEAGQWVEVIDLGDRVLFIGHFGNVCCSAKELPDGCGVSGNSILFTNEPGYVTFAYKYGVHTGRAEDELNIWRFSREIRVMIVNTFPVVALRLERQAENLALDT.

The 49-residue stretch at 3 to 51 folds into the F-box domain; it reads PNWSQLPEELLNLISKNLDNCFDVVHARSICRSWRSAFPFPSSLSTLSY. Kelch repeat units follow at residues 87–137 and 259–309; these read PEYF…PLGF and NPFP…CCSA.

The polypeptide is F-box/kelch-repeat protein At1g64840 (Arabidopsis thaliana (Mouse-ear cress)).